Reading from the N-terminus, the 101-residue chain is Anti-sigma factor RshA (101 aa).

Residues 1-20 are disordered; the sequence is MSETEREDERWTPPIGPIDP. 4 residues coordinate iron-sulfur cluster: Cys25, His51, Cys55, and Cys58. Thr96 bears the Phosphothreonine mark.

This sequence belongs to the zinc-associated anti-sigma factor (ZAS) superfamily. In terms of assembly, interacts with cognate ECF RNA polymerase sigma factor SigH under reducing conditions; the complex is disrupted under oxiding conditions or as temperatures rise. Binding inhibits the interaction of SigH with the RNA polymerase catalytic core. Iron-sulfur cluster is required as a cofactor. Post-translationally, phosphorylated, probably by PknB. Phosphorylation decreases interaction with SigH, probably leading to increased SigH-mediated transcription.

Functionally, a redox-regulated anti-sigma factor for cognate extracytoplasmic function (ECF) sigma factor SigH. ECF sigma factors are held in an inactive form by an anti-sigma factor. Overexpression leads to increased susceptibility to diamide. This Mycolicibacterium smegmatis (strain ATCC 700084 / mc(2)155) (Mycobacterium smegmatis) protein is Anti-sigma factor RshA (rshA).